Here is a 460-residue protein sequence, read N- to C-terminus: DNA repair protein RAD57 (460 aa).

125-132 (GESSTGKS) contributes to the ATP binding site.

It belongs to the RecA family.

Its subcellular location is the nucleus. Functionally, participates in the repair of X-ray-induced damage to DNA and in meiosis. It may act in part by stabilizing a repair complex of other RAD genes. The chain is DNA repair protein RAD57 (RAD57) from Saccharomyces cerevisiae (strain ATCC 204508 / S288c) (Baker's yeast).